The following is a 704-amino-acid chain: Chloride intracellular channel protein 6 (704 aa).

Low complexity predominate over residues 1–13 (MAEAAEPEGVAPG). Residues 1–446 (MAEAAEPEGV…EDGEASEPRA (446 aa)) are disordered. Over residues 39–48 (EGPEGSEGAE) the composition is skewed to acidic residues. Phosphoserine is present on Ser-44. A compositionally biased stretch (basic and acidic residues) spans 67 to 83 (RGPEAEARGTRGAHGET). Over residues 90-100 (PEGAEVPQGGE) the composition is skewed to low complexity. Over residues 121 to 147 (PRGEAQREPEDSAAPERQEEAEQRPEV) the composition is skewed to basic and acidic residues. A run of 13 repeats spans residues 157 to 166 (GDSVDAEGPL), 167 to 176 (GDNIEAEGPA), 177 to 186 (GDSVEAEGRV), 187 to 196 (GDSVDAEGPA), 197 to 206 (GDSVDAEGPL), 207 to 216 (GDNIQAEGPA), 217 to 226 (GDSVDAEGRV), 227 to 236 (GDSVDAEGPA), 237 to 246 (GDSVDAEGRV), 247 to 256 (GDSVEAGDPA), 257 to 266 (GDGVEAGVPA), 267 to 276 (GDSVEAEGPA), and 277 to 286 (GDSMDAEGPA). A 13 X 10 AA tandem repeat of G-D-[SNG]-[VIM]-[DEQ]-A-[EAG]-[GDVE]-[PRG]-[LAVP] region spans residues 157 to 282 (GDSVDAEGPL…EGPAGDSMDA (126 aa)). The span at 295–306 (EPQQSGDGSLSP) shows a compositional bias: polar residues. 2 stretches are compositionally biased toward basic and acidic residues: residues 350-360 (ARADAGEDRVG) and 371-385 (EERR…REEE). 2 positions are modified to phosphoserine: Ser-397 and Ser-442. Over residues 434-446 (GRREDGEASEPRA) the composition is skewed to basic and acidic residues. The short motif at 487 to 490 (CPFS) is the G-site element. A helical transmembrane segment spans residues 489–509 (FSQRLFMILWLKGVIFNVTTV). A GST C-terminal domain is found at 556 to 704 (YPKLGTQHPE…AYSDVAKRMK (149 aa)).

This sequence belongs to the chloride channel CLIC family. Monomer (soluble state). Interacts with dopamine receptors DRD2, DRD3 and DRD4. In terms of processing, phosphorylated. Expressed in brain, placenta, pancreas, liver, lung, heart, kidney, liver, spleen, soleus muscle, and brown fat.

It is found in the cytoplasm. The protein localises to the cell membrane. It catalyses the reaction chloride(in) = chloride(out). Its activity is regulated as follows. Channel activity is redox- and pH-regulated. Inhibited by IAA-94. Functionally, in the soluble state, catalyzes glutaredoxin-like thiol disulfide exchange reactions with reduced glutathione as electron donor. Can insert into membranes and form voltage-dependent chloride-selective channels. The channel opens upon membrane depolarization at positive voltages and closes at negative membrane voltages. May play a critical role in water-secreting cells, possibly through the regulation of chloride ion transport. This is Chloride intracellular channel protein 6 from Homo sapiens (Human).